A 102-amino-acid polypeptide reads, in one-letter code: Large ribosomal subunit protein bL21 (102 aa).

The protein belongs to the bacterial ribosomal protein bL21 family. As to quaternary structure, part of the 50S ribosomal subunit. Contacts protein L20.

This protein binds to 23S rRNA in the presence of protein L20. The sequence is that of Large ribosomal subunit protein bL21 from Cytophaga hutchinsonii (strain ATCC 33406 / DSM 1761 / CIP 103989 / NBRC 15051 / NCIMB 9469 / D465).